A 314-amino-acid polypeptide reads, in one-letter code: MSASLAINFLNHTYENPFMNASGVHCMSTKELDELKDSRAGAFITKSSTTSKREGNPEPRYFSVPLGSINSMGLPNEGFDYYLKYALEYQKNGSTSTPLFFSVAGMSVEENLKMLQKIQDSDFNGITELNLSCPNVPGKPQVAYDFELTKEILTKVFEFFKKPLGVKLPPYFDFAHFDIMAGILNQLPLSYVNCINSIGNGLYINVETESVVVKPKNGFGGIGGEYVKPTALANVRAFYTRLNPTIKIIGTGGIKTGQDAFEHLLCGATMLQVGTELYKEGVSIFDRLERELKELMDKKGYTSIEQFRGKLNSL.

Residues K46, 70-74 (NSMGL), and N130 each bind substrate. An FMN-binding site is contributed by 46-47 (KS). N130 serves as a coordination point for FMN. Catalysis depends on nucleophile residues S132 and C133. 2 residues coordinate FMN: K167 and I195. A substrate-binding site is contributed by 196–197 (NS). Residues G224, 252 to 253 (GG), and 274 to 275 (GT) each bind FMN.

Belongs to the dihydroorotate dehydrogenase family. Type 1 subfamily. Homodimer. Requires FMN as cofactor.

It is found in the cytoplasm. It carries out the reaction (S)-dihydroorotate + fumarate = orotate + succinate. It functions in the pathway pyrimidine metabolism; UMP biosynthesis via de novo pathway. With respect to regulation, the activity is independent of the presence of oxygen. In terms of biological role, catalyzes the conversion of dihydroorotate to orotate with fumarate as the electron acceptor. In Lachancea kluyveri (strain ATCC 58438 / CBS 3082 / BCRC 21498 / NBRC 1685 / JCM 7257 / NCYC 543 / NRRL Y-12651) (Yeast), this protein is Dihydroorotate dehydrogenase (fumarate) (URA1).